We begin with the raw amino-acid sequence, 98 residues long: NADH-ubiquinone oxidoreductase chain 4L (98 aa).

The next 3 membrane-spanning stretches (helical) occupy residues 1–21 (MPVV…GLLI), 29–49 (SLLC…VTVL), and 61–81 (IILL…LVMV).

Belongs to the complex I subunit 4L family. As to quaternary structure, core subunit of respiratory chain NADH dehydrogenase (Complex I) which is composed of 45 different subunits.

The protein resides in the mitochondrion inner membrane. The enzyme catalyses a ubiquinone + NADH + 5 H(+)(in) = a ubiquinol + NAD(+) + 4 H(+)(out). Its function is as follows. Core subunit of the mitochondrial membrane respiratory chain NADH dehydrogenase (Complex I) which catalyzes electron transfer from NADH through the respiratory chain, using ubiquinone as an electron acceptor. Part of the enzyme membrane arm which is embedded in the lipid bilayer and involved in proton translocation. This is NADH-ubiquinone oxidoreductase chain 4L (MT-ND4L) from Ursus maritimus (Polar bear).